Reading from the N-terminus, the 482-residue chain is MPLLDRVREYVVRHGMLEPGDRVIVAVSGGPDSLALTHVLYRLAPAWRLSLHLFHLDHGLRGEASRADAAFVADLARELSLPLTTVTLRPGELEAMRGSLEDNARRRRYAEMARLAAAIGAQRAATGHNRNDQAETVLMRLLRGSGSTGLAGIPPVRREGGLTIIRPLLGASRQEILAYCRAHGLTPRMDATNLQGDFERNRIRLEILPALTERFGDAVVDNLAQTADLLREEDRLLAELTREACARCGWRETGEATGEPVVELDGTLLVQEPLALARRIVRMAVQRVSGSAYGPGLSAVTRALELAGRTEGSHWLDLPQGVRLSVAYGRCRFARSHPQLGPGAEALEQVWPVAVPGETAIPALGVTVAAELVPPSAMPARLPDDEMWLDRDRLPGPLAVRTRRPGDRLWPAGMQGSKKLQDILVDAKVPRDQRDGLPLLVAGDTVVWVPGVIRDRRFRPDAGTRSAVRVTVRRRPEGSGGD.

Residue 28–33 participates in ATP binding; that stretch reads SGGPDS.

This sequence belongs to the tRNA(Ile)-lysidine synthase family.

It localises to the cytoplasm. It catalyses the reaction cytidine(34) in tRNA(Ile2) + L-lysine + ATP = lysidine(34) in tRNA(Ile2) + AMP + diphosphate + H(+). Ligates lysine onto the cytidine present at position 34 of the AUA codon-specific tRNA(Ile) that contains the anticodon CAU, in an ATP-dependent manner. Cytidine is converted to lysidine, thus changing the amino acid specificity of the tRNA from methionine to isoleucine. This chain is tRNA(Ile)-lysidine synthase, found in Symbiobacterium thermophilum (strain DSM 24528 / JCM 14929 / IAM 14863 / T).